The primary structure comprises 464 residues: Sulfoacetaldehyde dehydrogenase (acylating) (464 aa).

Cys-241 serves as the catalytic Nucleophile.

This sequence belongs to the aldehyde dehydrogenase family.

It carries out the reaction sulfoacetaldehyde + NADP(+) + CoA = sulfoacetyl-CoA + NADPH + H(+). Its function is as follows. Involved in the degradation of sulfoacetate. Catalyzes the conversion of sulfoacetyl-CoA and NADPH to sulfoacetaldehyde, CoA and NADP(+). A much lower level of activity (1%) is observed when NADP(+) is replaced with NAD(+). In Bilophila wadsworthia (strain 3_1_6), this protein is Sulfoacetaldehyde dehydrogenase (acylating).